Reading from the N-terminus, the 229-residue chain is Small ribosomal subunit protein uS3 (229 aa).

The KH type-2 domain maps to 39–107 (VRQFLIKELK…PAQINISEVR (69 aa)).

The protein belongs to the universal ribosomal protein uS3 family. In terms of assembly, part of the 30S ribosomal subunit. Forms a tight complex with proteins S10 and S14.

In terms of biological role, binds the lower part of the 30S subunit head. Binds mRNA in the 70S ribosome, positioning it for translation. This Photobacterium profundum (strain SS9) protein is Small ribosomal subunit protein uS3.